The following is a 491-amino-acid chain: MSLVAYASSDESEPDEAEPEPEEEEAVAPTSGPALGGLFASLPAPKGPALLPPPPQMLAPAFPPPLLLPPPTGDPRLQPPPPLPFGLGGFPPPPGVSPAEAAGVGEGLGLGLPSPRGPGLNLPPPIGGAGPPLGLPKPKKRKEPVKIAAPELHKGDSDSEEDEPTKKKTILQGSSEGTGLSALLPQPKNLTVKETNRLLLPHAFSRKPSDGSPDTKPSRLASKTKTSSLAPVVGTTTTTPSPSAIKAAAKSAALQVTKQITQEEDDSDEEVAPENFFSLPEKAEPPGVEPYPYPIPTVPEELPPGTEPEPAFQDDAANAPLEFKMAAGSSGAPWMPKPGDDYSYNQFSTYGDANAAGAYYQDYYSGGYYPAQDPALVPPQEIAPDASFIDDEAFKRLQGKRNRGREEINFVEIKGDDQLSGAQQWMTKSLTEEKTMKSFSKKKGEQPTGQQRRKHQITYLIHQAKERELELKNTWSENKLSRRQTQAKYGF.

Positions 1 to 100 are mediates interaction with MAD2L2; sequence MSLVAYASSD…PPPPGVSPAE (100 aa). Disordered regions lie at residues 1–244, 260–313, and 432–454; these read MSLV…SPSA, ITQE…PAFQ, and EEKT…QRRK. Over residues 10–26 the composition is skewed to acidic residues; it reads DESEPDEAEPEPEEEEA. Low complexity predominate over residues 40–49; the sequence is ASLPAPKGPA. Over residues 50–96 the composition is skewed to pro residues; the sequence is LLPPPPQMLAPAFPPPLLLPPPTGDPRLQPPPPLPFGLGGFPPPPGV. Ser-97, Ser-114, Ser-157, Ser-159, Ser-212, and Ser-218 each carry phosphoserine. Over residues 111–120 the composition is skewed to low complexity; that stretch reads GLPSPRGPGL. Residues 230–244 show a composition bias toward low complexity; sequence APVVGTTTTTPSPSA. Thr-239 bears the Phosphothreonine mark. Phosphoserine occurs at positions 241 and 267. Positions 262–272 are enriched in acidic residues; sequence QEEDDSDEEVA. The segment covering 287 to 307 has biased composition (pro residues); sequence GVEPYPYPIPTVPEELPPGTE.

In terms of assembly, interacts with MAD2L2; the interaction is direct. In terms of tissue distribution, ubiquitous in fetal and adult tissues.

It is found in the nucleus. In terms of biological role, may regulate cell cycle progression through interaction with MAD2L2. This Homo sapiens (Human) protein is Proline-rich protein PRCC (PRCC).